We begin with the raw amino-acid sequence, 637 residues long: Threonine--tRNA ligase (637 aa).

The 61-residue stretch at M1–T61 folds into the TGS domain. The segment at D242 to P532 is catalytic. The Zn(2+) site is built by C333, H384, and H509.

The protein belongs to the class-II aminoacyl-tRNA synthetase family. Homodimer. The cofactor is Zn(2+).

The protein resides in the cytoplasm. The catalysed reaction is tRNA(Thr) + L-threonine + ATP = L-threonyl-tRNA(Thr) + AMP + diphosphate + H(+). In terms of biological role, catalyzes the attachment of threonine to tRNA(Thr) in a two-step reaction: L-threonine is first activated by ATP to form Thr-AMP and then transferred to the acceptor end of tRNA(Thr). Also edits incorrectly charged L-seryl-tRNA(Thr). The protein is Threonine--tRNA ligase of Clostridium kluyveri (strain NBRC 12016).